Reading from the N-terminus, the 365-residue chain is Aminomethyltransferase (365 aa).

It belongs to the GcvT family. As to quaternary structure, the glycine cleavage system is composed of four proteins: P, T, L and H.

It catalyses the reaction N(6)-[(R)-S(8)-aminomethyldihydrolipoyl]-L-lysyl-[protein] + (6S)-5,6,7,8-tetrahydrofolate = N(6)-[(R)-dihydrolipoyl]-L-lysyl-[protein] + (6R)-5,10-methylene-5,6,7,8-tetrahydrofolate + NH4(+). In terms of biological role, the glycine cleavage system catalyzes the degradation of glycine. This chain is Aminomethyltransferase, found in Yersinia pseudotuberculosis serotype O:1b (strain IP 31758).